The sequence spans 258 residues: Deoxyribose-phosphate aldolase (258 aa).

The active-site Proton donor/acceptor is D102. The Schiff-base intermediate with acetaldehyde role is filled by K165. The Proton donor/acceptor role is filled by K199.

It belongs to the DeoC/FbaB aldolase family. DeoC type 2 subfamily.

It is found in the cytoplasm. It catalyses the reaction 2-deoxy-D-ribose 5-phosphate = D-glyceraldehyde 3-phosphate + acetaldehyde. The protein operates within carbohydrate degradation; 2-deoxy-D-ribose 1-phosphate degradation; D-glyceraldehyde 3-phosphate and acetaldehyde from 2-deoxy-alpha-D-ribose 1-phosphate: step 2/2. Its function is as follows. Catalyzes a reversible aldol reaction between acetaldehyde and D-glyceraldehyde 3-phosphate to generate 2-deoxy-D-ribose 5-phosphate. The chain is Deoxyribose-phosphate aldolase from Vibrio parahaemolyticus serotype O3:K6 (strain RIMD 2210633).